A 391-amino-acid polypeptide reads, in one-letter code: Ferrochelatase (391 aa).

Residues H196 and E281 each contribute to the Fe cation site.

It belongs to the ferrochelatase family.

It localises to the cytoplasm. The enzyme catalyses heme b + 2 H(+) = protoporphyrin IX + Fe(2+). Its pathway is porphyrin-containing compound metabolism; protoheme biosynthesis; protoheme from protoporphyrin-IX: step 1/1. Its function is as follows. Catalyzes the ferrous insertion into protoporphyrin IX. This chain is Ferrochelatase, found in Synechococcus sp. (strain CC9311).